A 1128-amino-acid polypeptide reads, in one-letter code: Transient receptor potential-gamma protein (1128 aa).

At 1-325 (MMEEENTIRP…MALQAVDIIR (325 aa)) the chain is on the cytoplasmic side. ANK repeat units lie at residues 57–86 (LGRT…DTKD) and 131–160 (PDIT…VLPM). A helical transmembrane segment spans residues 326–346 (IGIMFPIFSLAYILAPYSSIG). Residues 347–403 (QTMRKPFIKFICHSASYFTFLFLLMLASQRIETFIGGWFFADSSGMLNTMEELPTKR) lie on the Extracellular side of the membrane. The chain crosses the membrane as a helical span at residues 404–424 (GAKPTFIEWLILAWVSGLIWS). Residues 425 to 444 (EVKQLWDVGLQEYLNDMWNV) are Cytoplasmic-facing. A helical membrane pass occupies residues 445–465 (IDFVTNSLYVATVALRVVSFF). Over 466–492 (QVQKEMIYNSHATDLPRERWDAWDPML) the chain is Extracellular. Residues 493-513 (ISEGLFSAANIFSSLKLVYIF) traverse the membrane as a helical segment. The Cytoplasmic segment spans residues 514 to 535 (SVNPHLGPLQVSLSRMVMDIMK). A helical membrane pass occupies residues 536 to 556 (FFFLYVLVLFAFGSGLNQLLW). Residues 557–629 (YYADLEKKRC…GIKIFTRFWG (73 aa)) lie on the Extracellular side of the membrane. A helical membrane pass occupies residues 630–650 (MLMFGTYSVINIVVLLNLLIA). The Cytoplasmic segment spans residues 651–1128 (MMNHSYQLIS…SCVSTTGAIG (478 aa)). 2 disordered regions span residues 865 to 898 (RQQS…TASS) and 1064 to 1111 (AAEA…SVNS). A compositionally biased stretch (low complexity) spans 878–893 (ESPTTPTAPQGTQGAA). Residues 1085–1111 (TQSQHDSVETNSTFTLSIDPSNTSVNS) are compositionally biased toward polar residues.

This sequence belongs to the transient receptor (TC 1.A.4) family. STrpC subfamily. Interacts preferentially with trpl and interacts to a lower extent with trp. In terms of tissue distribution, expressed predominantly in the rhabdomeres of photoreceptor cells.

Its subcellular location is the cell projection. The protein resides in the rhabdomere membrane. Its function is as follows. A light-sensitive calcium channel that is required for inositide-mediated Ca(2+) entry in the retina during phospholipase C (PLC)-mediated phototransduction. Forms a regulated cation channel when heteromultimerized with trpl. The protein is Transient receptor potential-gamma protein (Trpgamma) of Drosophila melanogaster (Fruit fly).